The following is a 251-amino-acid chain: Cell division protein ZapD (251 aa).

Belongs to the ZapD family. In terms of assembly, interacts with FtsZ.

The protein resides in the cytoplasm. In terms of biological role, cell division factor that enhances FtsZ-ring assembly. Directly interacts with FtsZ and promotes bundling of FtsZ protofilaments, with a reduction in FtsZ GTPase activity. This Janthinobacterium sp. (strain Marseille) (Minibacterium massiliensis) protein is Cell division protein ZapD.